Consider the following 396-residue polypeptide: 1-deoxy-D-xylulose 5-phosphate reductoisomerase (396 aa).

Residues threonine 13, glycine 14, serine 15, isoleucine 16, and asparagine 127 each coordinate NADPH. Lysine 128 lines the 1-deoxy-D-xylulose 5-phosphate pocket. Glutamate 129 is a binding site for NADPH. Aspartate 153 is a binding site for Mn(2+). Serine 154, glutamate 155, serine 184, and histidine 207 together coordinate 1-deoxy-D-xylulose 5-phosphate. Position 155 (glutamate 155) interacts with Mn(2+). NADPH is bound at residue glycine 213. The 1-deoxy-D-xylulose 5-phosphate site is built by serine 220, asparagine 225, lysine 226, and glutamate 229. Glutamate 229 contacts Mn(2+).

The protein belongs to the DXR family. Mg(2+) serves as cofactor. Mn(2+) is required as a cofactor.

It catalyses the reaction 2-C-methyl-D-erythritol 4-phosphate + NADP(+) = 1-deoxy-D-xylulose 5-phosphate + NADPH + H(+). It participates in isoprenoid biosynthesis; isopentenyl diphosphate biosynthesis via DXP pathway; isopentenyl diphosphate from 1-deoxy-D-xylulose 5-phosphate: step 1/6. Its function is as follows. Catalyzes the NADPH-dependent rearrangement and reduction of 1-deoxy-D-xylulose-5-phosphate (DXP) to 2-C-methyl-D-erythritol 4-phosphate (MEP). The sequence is that of 1-deoxy-D-xylulose 5-phosphate reductoisomerase from Pseudomonas fluorescens (strain Pf0-1).